A 415-amino-acid chain; its full sequence is Imidazolonepropionase (415 aa).

2 residues coordinate Fe(3+): histidine 75 and histidine 77. Histidine 75 and histidine 77 together coordinate Zn(2+). The 4-imidazolone-5-propanoate site is built by arginine 84, tyrosine 147, and histidine 180. Residue tyrosine 147 coordinates N-formimidoyl-L-glutamate. Position 245 (histidine 245) interacts with Fe(3+). A Zn(2+)-binding site is contributed by histidine 245. Glutamine 248 is a 4-imidazolone-5-propanoate binding site. A Fe(3+)-binding site is contributed by aspartate 320. Aspartate 320 is a Zn(2+) binding site. Residues asparagine 322 and glycine 324 each contribute to the N-formimidoyl-L-glutamate site. Threonine 325 serves as a coordination point for 4-imidazolone-5-propanoate.

This sequence belongs to the metallo-dependent hydrolases superfamily. HutI family. Zn(2+) serves as cofactor. Fe(3+) is required as a cofactor.

Its subcellular location is the cytoplasm. The catalysed reaction is 4-imidazolone-5-propanoate + H2O = N-formimidoyl-L-glutamate. The protein operates within amino-acid degradation; L-histidine degradation into L-glutamate; N-formimidoyl-L-glutamate from L-histidine: step 3/3. Its function is as follows. Catalyzes the hydrolytic cleavage of the carbon-nitrogen bond in imidazolone-5-propanoate to yield N-formimidoyl-L-glutamate. It is the third step in the universal histidine degradation pathway. In Photorhabdus laumondii subsp. laumondii (strain DSM 15139 / CIP 105565 / TT01) (Photorhabdus luminescens subsp. laumondii), this protein is Imidazolonepropionase.